Consider the following 717-residue polypeptide: Cleavage stimulation factor subunit 3 (717 aa).

An N-acetylserine modification is found at Ser-2. HAT repeat units lie at residues Gln-45 to Lys-77, Lys-79 to Glu-110, Ser-117 to Gly-152, Gln-163 to Gly-196, Lys-221 to Ser-261, Leu-271 to Gln-303, Leu-319 to Ser-352, Met-354 to Arg-387, and Asn-458 to Asn-494. A disordered region spans residues Val-684–His-705. At Ser-691 the chain carries Phosphoserine.

Homodimer. The CSTF complex is composed of CSTF1 (50 kDa subunit), CSTF2 (64 kDa subunit) and CSTF3 (77 kDa subunit). CSTF3 directly interacts with CSTF1 and CSTF2. Interacts with FIP1L1.

The protein localises to the nucleus. Its function is as follows. One of the multiple factors required for polyadenylation and 3'-end cleavage of mammalian pre-mRNAs. In Pongo abelii (Sumatran orangutan), this protein is Cleavage stimulation factor subunit 3 (CSTF3).